The following is a 196-amino-acid chain: 7-methyl-GTP pyrophosphatase (196 aa).

The active-site Proton acceptor is aspartate 72.

This sequence belongs to the Maf family. YceF subfamily. The cofactor is a divalent metal cation.

Its subcellular location is the cytoplasm. The catalysed reaction is N(7)-methyl-GTP + H2O = N(7)-methyl-GMP + diphosphate + H(+). In terms of biological role, nucleoside triphosphate pyrophosphatase that hydrolyzes 7-methyl-GTP (m(7)GTP). May have a dual role in cell division arrest and in preventing the incorporation of modified nucleotides into cellular nucleic acids. The sequence is that of 7-methyl-GTP pyrophosphatase from Neisseria meningitidis serogroup A / serotype 4A (strain DSM 15465 / Z2491).